The primary structure comprises 117 residues: MPEIKIFHNPRCSKSRAALSLLEERGIAAEVVKYLDTPPDLSELKDIFNKLGLASARGMMRVKDDLYKELGLDNPNLDNDALLRAIADHPALLERPIVLANGKAAVGRPLENIEAVL.

The active-site Nucleophile; cysteine thioarsenate intermediate is Cys-12.

It belongs to the ArsC family.

It catalyses the reaction [glutaredoxin]-dithiol + arsenate + glutathione + H(+) = glutathionyl-S-S-[glutaredoxin] + arsenite + H2O. Functionally, involved in resistance to arsenate. Catalyzes the reduction of arsenate [As(V)] to arsenite [As(III)]. In Neisseria meningitidis serogroup A / serotype 4A (strain DSM 15465 / Z2491), this protein is Arsenate reductase (arsC).